Here is a 1191-residue protein sequence, read N- to C-terminus: uncharacterized protein (1191 aa).

WD repeat units follow at residues 558–588 (GHRD…HLWT), 599–629 (GHTG…KIWD), 640–670 (GHQD…RLWH), 682–712 (GHTK…RLWD), 723–753 (LPEV…RLWT), 764–794 (GHDE…IHWS), 805–835 (GYPE…KVWD), 995–1025 (QRKE…TLWN), 1036–1066 (AHGD…KIWS), 1077–1107 (SDPL…RLWD), and 1118–1148 (STSG…QSWP).

This is an uncharacterized protein from Synechocystis sp. (strain ATCC 27184 / PCC 6803 / Kazusa).